The sequence spans 356 residues: GATA zinc finger domain-containing protein 17 (356 aa).

The stretch at 91–119 (LKEFDALEASLNAELECLELQYSSDTSEL) forms a coiled coil. The span at 158–188 (TASTSTSTPTNTTTTTTTTSNSLTKNNNSAL) shows a compositional bias: low complexity. Residues 158–294 (TASTSTSTPT…DITEESKVKE (137 aa)) form a disordered region. A compositionally biased stretch (acidic residues) spans 206–228 (SSDDEEDDQKDDQDKDDSDEDNV). Residues 260–284 (TAITTTTTPITTTDSNIIGTTTTTD) are compositionally biased toward low complexity. The segment at 304 to 331 (CYVCKVTETPYWRRGTDNGVVVDLCNEC) adopts a GATA-type zinc-finger fold.

The protein is GATA zinc finger domain-containing protein 17 (gtaQ) of Dictyostelium discoideum (Social amoeba).